Reading from the N-terminus, the 121-residue chain is uncharacterized protein (121 aa).

The signal sequence occupies residues 1 to 23; sequence MNFSTVFQAIIAVLGLTTVTALA. Asparagine 68 and asparagine 84 each carry an N-linked (GlcNAc...) asparagine glycan.

In terms of processing, N-glycosylated.

This is an uncharacterized protein from Saccharomyces cerevisiae (strain ATCC 204508 / S288c) (Baker's yeast).